The primary structure comprises 979 residues: Mast/stem cell growth factor receptor Kit (979 aa).

The N-terminal stretch at 1–27 is a signal peptide; that stretch reads MRGARGAWDFLCVLLLLLLLGVQTGSS. At 28 to 527 the chain is on the extracellular side; it reads QPSVSPGEPS…QIHPHTLFTP (500 aa). Ig-like C2-type domains are found at residues 29 to 114, 123 to 207, 214 to 311, 320 to 413, and 416 to 510; these read PSVS…VFVR, DLPL…LKVR, PVVS…LEVV, PMMS…VYVN, and PEIL…FNFA. Residues C60 and C99 are joined by a disulfide bond. 3 N-linked (GlcNAc...) asparagine glycosylation sites follow: N96, N132, and N147. 3 cysteine pairs are disulfide-bonded: C138–C188, C153–C185, and C235–C293. N286, N296, N303, N355, N370, N403, N466, and N489 each carry an N-linked (GlcNAc...) asparagine glycan. C431 and C494 form a disulfide bridge. The chain crosses the membrane as a helical span at residues 528–548; sequence LLIGFVIAAGMMCIIVMILTY. Residues 549 to 979 are Cytoplasmic-facing; sequence KYLQKPMYEV…TQPLLVHEDV (431 aa). A phosphotyrosine; by autocatalysis mark is found at Y550, Y556, Y571, and Y573. Y571 provides a ligand contact to Mg(2+). An important for interaction with phosphotyrosine-binding proteins region spans residues 571–573; it reads YVY. The Protein kinase domain occupies 592-940; it reads LSFGKTLGAG…ISDSTNHIYS (349 aa). ATP-binding positions include 599–606, K626, and 674–680; these read GAGAFGKV and EYCCYGD. Residues Y706, Y724, and Y733 each carry the phosphotyrosine; by autocatalysis modification. Phosphoserine; by PKC/PRKCA is present on residues S744 and S749. D795 acts as the Proton acceptor in catalysis. R799 provides a ligand contact to ATP. N800 and D813 together coordinate Mg(2+). S824 carries the phosphoserine modification. Y826 carries the phosphotyrosine; by autocatalysis modification. Phosphoserine is present on S894. Phosphotyrosine; by autocatalysis occurs at positions 903 and 939. S962 carries the phosphoserine modification.

It belongs to the protein kinase superfamily. Tyr protein kinase family. CSF-1/PDGF receptor subfamily. Monomer in the absence of bound KITLG/SCF. Homodimer in the presence of bound KITLG/SCF, forming a heterotetramer with two KITLG/SCF molecules. Interacts (via phosphorylated tyrosine residues) with the adapter proteins GRB2 and GRB7 (via SH2 domain), and SH2B2/APS. Interacts (via C-terminus) with MPDZ (via the tenth PDZ domain). Interacts (via phosphorylated tyrosine residues) with PIK3R1 and PIK3 catalytic subunit. Interacts (via phosphorylated tyrosine) with CRK (isoform Crk-II), FYN, SHC1 and MATK/CHK (via SH2 domain). Interacts with LYN and FES/FPS. Interacts (via phosphorylated tyrosine residues) with the protein phosphatases PTPN6/SHP-1 (via SH2 domain), PTPN11/SHP-2 (via SH2 domain) and PTPRU. Interacts with PLCG1. Interacts with DOK1 and TEC. Interacts with IL1RAP (independent of stimulation with KITLG/SCF). A mast cell-specific KITLG/SCF-induced interleukin-33 signaling complex contains IL1RL1, IL1RAP, KIT and MYD88. Ubiquitinated by SOCS6. KIT is rapidly ubiquitinated after autophosphorylation induced by KITLG/SCF binding, leading to internalization and degradation. Post-translationally, autophosphorylated on tyrosine residues. KITLG/SCF binding promotes autophosphorylation. Phosphorylated tyrosine residues are important for interaction with specific binding partners.

The protein localises to the cell membrane. The enzyme catalyses L-tyrosyl-[protein] + ATP = O-phospho-L-tyrosyl-[protein] + ADP + H(+). Present in an inactive conformation in the absence of bound ligand. KITLG/SCF binding leads to dimerization and activation by autophosphorylation on tyrosine residues. Activity is down-regulated by PRKCA-mediated phosphorylation on serine residues. Its function is as follows. Tyrosine-protein kinase that acts as a cell-surface receptor for the cytokine KITLG/SCF and plays an essential role in the regulation of cell survival and proliferation, hematopoiesis, stem cell maintenance, gametogenesis, mast cell development, migration and function, and in melanogenesis. In response to KITLG/SCF binding, KIT can activate several signaling pathways. Phosphorylates PIK3R1, PLCG1, SH2B2/APS and CBL. Activates the AKT1 signaling pathway by phosphorylation of PIK3R1, the regulatory subunit of phosphatidylinositol 3-kinase. Activated KIT also transmits signals via GRB2 and activation of RAS, RAF1 and the MAP kinases MAPK1/ERK2 and/or MAPK3/ERK1. Promotes activation of STAT family members STAT1, STAT3, STAT5A and STAT5B. Activation of PLCG1 leads to the production of the cellular signaling molecules diacylglycerol and inositol 1,4,5-trisphosphate. KIT signaling is modulated by protein phosphatases, and by rapid internalization and degradation of the receptor. Activated KIT promotes phosphorylation of the protein phosphatases PTPN6/SHP-1 and PTPRU, and of the transcription factors STAT1, STAT3, STAT5A and STAT5B. Promotes phosphorylation of PIK3R1, CBL, CRK (isoform Crk-II), LYN, MAPK1/ERK2 and/or MAPK3/ERK1, PLCG1, SRC and SHC1. This is Mast/stem cell growth factor receptor Kit (KIT) from Canis lupus familiaris (Dog).